A 217-amino-acid polypeptide reads, in one-letter code: Large ribosomal subunit protein uL1 (217 aa).

Belongs to the universal ribosomal protein uL1 family. As to quaternary structure, part of the 50S ribosomal subunit.

In terms of biological role, binds directly to 23S rRNA. Probably involved in E site tRNA release. Protein L1 is also a translational repressor protein, it controls the translation of its operon by binding to its mRNA. The polypeptide is Large ribosomal subunit protein uL1 (Thermoplasma volcanium (strain ATCC 51530 / DSM 4299 / JCM 9571 / NBRC 15438 / GSS1)).